Reading from the N-terminus, the 450-residue chain is 6-phospho-beta-glucosidase (450 aa).

5–73 provides a ligand contact to NAD(+); that stretch reads LKVVTIGGGS…VPMKLYKTLD (69 aa). The substrate site is built by R96 and N150. 2 residues coordinate Mn(2+): C172 and H203. Y258 functions as the Proton acceptor in the catalytic mechanism.

Homotetramer. The cofactor is NAD(+). Mn(2+) serves as cofactor. Requires Co(2+) as cofactor. It depends on Ni(2+) as a cofactor.

It catalyses the reaction 6-phospho-beta-D-glucosyl-(1-&gt;4)-D-glucose + H2O = D-glucose 6-phosphate + D-glucose. Hydrolyzes a wide variety of P-beta-glucosides including cellobiose-6P, salicin-6P, arbutin-6P, gentiobiose-6P, methyl-beta-glucoside-6P and p-nitrophenyl-beta-D-glucopyranoside-6P. Is also able to hydrolyze phospho-N,N'-diacetylchitobiose. In Escherichia coli (strain K12), this protein is 6-phospho-beta-glucosidase (chbF).